The following is a 123-amino-acid chain: Ferredoxin-5 (123 aa).

The 2Fe-2S ferredoxin-type domain occupies 2–119; it reads PNITFTSPIM…DVMVHFTGTP (118 aa). [2Fe-2S] cluster contacts are provided by cysteine 42, cysteine 47, cysteine 50, and cysteine 102.

It belongs to the 2Fe2S plant-type ferredoxin family. [2Fe-2S] cluster serves as cofactor.

In terms of biological role, ferredoxins are iron-sulfur proteins that transfer electrons in a wide variety of metabolic reactions. This ferredoxin probably participates in nitrogen fixation. The protein is Ferredoxin-5 (fdxD) of Rhodobacter capsulatus (Rhodopseudomonas capsulata).